The following is a 96-amino-acid chain: MHVTLVEINVKEDKVEQFVEVFRANHQGSLLEPGNLRFDVLQDESIPTRFYIYEAYVDEAAVAAHKKTPHYLRCVEELEGLMTGPRKKTTFIGLMP.

The ABM domain occupies 2–91 (HVTLVEINVK…MTGPRKKTTF (90 aa)).

It belongs to the LsrG family. In terms of assembly, homodimer.

It localises to the cytoplasm. It catalyses the reaction (2S)-2-hydroxy-3,4-dioxopentyl phosphate = 3-hydroxy-2,4-dioxopentyl phosphate. In terms of biological role, involved in the degradation of phospho-AI-2, thereby terminating induction of the lsr operon and closing the AI-2 signaling cycle. Catalyzes the conversion of (4S)-4-hydroxy-5-phosphonooxypentane-2,3-dione (P-DPD) to 3-hydroxy-5-phosphonooxypentane-2,4-dione (P-HPD). The sequence is that of (4S)-4-hydroxy-5-phosphonooxypentane-2,3-dione isomerase from Yersinia enterocolitica serotype O:8 / biotype 1B (strain NCTC 13174 / 8081).